A 208-amino-acid chain; its full sequence is MWIPIIIPFGLRGKSKLIDNKKRICVNCKNSGVQLVKNDEWFHLFFIPFFKVKNGNMFLHCPSCGATIPYYEKETMPTFNNPDDVKFEAENNEKNHKKGKYDAPMAQVPPEYLQRQDQYPNQYQQQPQQQQPGYMDYNYNQPPVQLNKQAYDNYQQNDYKSNNQPNLAKENNISNENEELGDNKKEKKEKKHSFFSKLHKKEKNEIKE.

The span at 118-134 (QYPNQYQQQPQQQQPGY) shows a compositional bias: low complexity. A disordered region spans residues 118 to 208 (QYPNQYQQQP…HKKEKNEIKE (91 aa)). Over residues 138–175 (NYNQPPVQLNKQAYDNYQQNDYKSNNQPNLAKENNISN) the composition is skewed to polar residues. Positions 187-201 (KKEKKHSFFSKLHKK) are enriched in basic residues.

This is an uncharacterized protein from Dictyostelium discoideum (Social amoeba).